The primary structure comprises 128 residues: Calcitonin gene-related peptide 1 (128 aa).

A signal peptide spans 1–25; that stretch reads MGLWKSSPFLAFSILVLCQAGGLQA. The propeptide occupies 26 to 80; the sequence is APFRSALEGLPDPTALSEKEGRLLLAALVKAYVQRKNELEQEQEQETEGSSITAQ. A disordered region spans residues 63–83; the sequence is ELEQEQEQETEGSSITAQKRS. The span at 74-83 shows a compositional bias: polar residues; it reads GSSITAQKRS. Cys-84 and Cys-89 are oxidised to a cystine. Residue Phe-119 is modified to Phenylalanine amide. The propeptide occupies 125–128; that stretch reads DLRA.

It belongs to the calcitonin family.

The protein resides in the secreted. In terms of biological role, CGRP1/CALCA is a peptide hormone that induces vasodilation mediated by the CALCRL-RAMP1 receptor complex. Dilates a variety of vessels including the coronary, cerebral and systemic vasculature. Its abundance in the CNS also points toward a neurotransmitter or neuromodulator role. It also elevates platelet cAMP. CGRP1 can also bind and activate CALCR-RAMP1 (AMYR1) receptor complex. In Canis lupus familiaris (Dog), this protein is Calcitonin gene-related peptide 1 (CALCA).